Here is a 141-residue protein sequence, read N- to C-terminus: VLSPADKTNVKASWEKLGGHGAAYGAEALERMFLSFPTTKTYFPHFDLSHGSAQLQGHGKKVADALANAAAHVDDLPGALSALSDLHAHKLRVDPVNFKLLSHCLLVTLAAHLPADFTPAVHASLDKFLASVSTVLTSKYR.

Positions Val-1–Arg-141 constitute a Globin domain. Residue Ser-3 is modified to Phosphoserine. The residue at position 7 (Lys-7) is an N6-succinyllysine. Residue Thr-8 is modified to Phosphothreonine. Lys-11 bears the N6-succinyllysine mark. Residue Lys-16 is modified to N6-acetyllysine; alternate. Lys-16 bears the N6-succinyllysine; alternate mark. The residue at position 24 (Tyr-24) is a Phosphotyrosine. Position 35 is a phosphoserine (Ser-35). Lys-40 bears the N6-succinyllysine mark. At Ser-49 the chain carries Phosphoserine. Position 58 (His-58) interacts with O2. Heme b is bound at residue His-87. Ser-102 is subject to Phosphoserine. At Thr-108 the chain carries Phosphothreonine. Phosphoserine is present on residues Ser-124 and Ser-131. A phosphothreonine mark is found at Thr-134 and Thr-137. Ser-138 bears the Phosphoserine mark.

Belongs to the globin family. In terms of assembly, heterotetramer of two alpha chains and two beta chains. As to expression, red blood cells.

Its function is as follows. Involved in oxygen transport from the lung to the various peripheral tissues. The chain is Hemoglobin subunit alpha from Otospermophilus beecheyi (California ground squirrel).